Consider the following 627-residue polypeptide: Neutral endopeptidase (627 aa).

The region spanning Met-1 to Trp-627 is the Peptidase M13 domain. Zn(2+) is bound at residue His-475. Glu-476 is an active-site residue. Residues His-479 and Glu-535 each contribute to the Zn(2+) site. Asp-539 acts as the Proton donor in catalysis.

Belongs to the peptidase M13 family. Monomer. Zn(2+) is required as a cofactor.

Functionally, endopeptidase with broad substrate specificity for several oligopeptides. This is Neutral endopeptidase (pepO) from Lactococcus lactis subsp. lactis (strain IL1403) (Streptococcus lactis).